The sequence spans 371 residues: Palmitoyl-monogalactosyldiacylglycerol delta-7 desaturase, chloroplastic (371 aa).

Residues 1 to 67 constitute a chloroplast transit peptide; the sequence is MASLLTKPKP…KGLKRDVTTA (67 aa). The next 2 membrane-spanning stretches (helical) occupy residues 103–123 and 127–147; these read FGAV…PFQF and AVSV…TLSF. A Histidine box-1 motif is present at residues 148–153; that stretch reads HRNLSH. The Histidine box-2 motif lies at 185–189; that stretch reads HRYHH. A helical membrane pass occupies residues 251–271; sequence ALAVALYAMGGFPFIVWGMGV. The Histidine box-3 motif lies at 317–321; sequence HNNHH.

It belongs to the fatty acid desaturase type 1 family. Fe(2+) serves as cofactor. In terms of tissue distribution, highly expressed in young leaves. Low expression in roots.

The protein resides in the plastid. It is found in the chloroplast membrane. It carries out the reaction a 1-acyl-2-hexadecanoyl-glycerolipid + 2 reduced [2Fe-2S]-[ferredoxin] + O2 + 2 H(+) = a 1-acyl-2-[(7Z)-hexadecenoyl]-glycerolipid + 2 oxidized [2Fe-2S]-[ferredoxin] + 2 H2O. It functions in the pathway lipid metabolism; oxylipin biosynthesis. Its pathway is lipid metabolism; polyunsaturated fatty acid biosynthesis. Functionally, fatty acid desaturase involved in the first desaturation step leading to the formation of hexadeca 7,10,13-trienoic acid (16:3(7Z,10Z,13Z)), the major functional components of thylakoid membranes. Required for chloroplast biogenesis at low temperature. Also indirectly involved in the production of the oxylipin dinor-oxo-phyto-dienoic acid implicated in wound signaling. This Arabidopsis thaliana (Mouse-ear cress) protein is Palmitoyl-monogalactosyldiacylglycerol delta-7 desaturase, chloroplastic.